The following is a 115-amino-acid chain: Tyrosine-protein phosphatase 19 (115 aa).

The Tyrosine-protein phosphatase domain maps to 1-115 (WLMIVEQKCR…ETGSDAPMVV (115 aa)). Substrate is bound at residue Asp83.

This sequence belongs to the protein-tyrosine phosphatase family.

The enzyme catalyses O-phospho-L-tyrosyl-[protein] + H2O = L-tyrosyl-[protein] + phosphate. The polypeptide is Tyrosine-protein phosphatase 19 (STY-19) (Styela plicata (Wrinkled sea squirt)).